A 199-amino-acid chain; its full sequence is ATP synthase subunit a (199 aa).

The next 6 helical transmembrane spans lie at 2 to 22 (TNVY…LFYF), 25 to 45 (SMLG…FSYT), 53 to 73 (VISV…YFMY), 80 to 100 (MIEF…LTFI), 143 to 163 (VNVL…ELYL), and 164 to 184 (GIFY…VFFI).

It belongs to the ATPase A chain family. As to quaternary structure, F-type ATPases have 2 components, CF(1) - the catalytic core - and CF(0) - the membrane proton channel. CF(1) has five subunits: alpha(3), beta(3), gamma(1), delta(1), epsilon(1). CF(0) has three main subunits: a, b and c.

The protein localises to the mitochondrion inner membrane. Mitochondrial membrane ATP synthase (F(1)F(0) ATP synthase or Complex V) produces ATP from ADP in the presence of a proton gradient across the membrane which is generated by electron transport complexes of the respiratory chain. F-type ATPases consist of two structural domains, F(1) - containing the extramembraneous catalytic core and F(0) - containing the membrane proton channel, linked together by a central stalk and a peripheral stalk. During catalysis, ATP synthesis in the catalytic domain of F(1) is coupled via a rotary mechanism of the central stalk subunits to proton translocation. Key component of the proton channel; it may play a direct role in the translocation of protons across the membrane. This chain is ATP synthase subunit a (ATP6), found in Ascaris suum (Pig roundworm).